The chain runs to 211 residues: Nucleoside triphosphate pyrophosphatase (211 aa).

Asp75 (proton acceptor) is an active-site residue.

Belongs to the Maf family. A divalent metal cation is required as a cofactor.

It is found in the cytoplasm. The enzyme catalyses a ribonucleoside 5'-triphosphate + H2O = a ribonucleoside 5'-phosphate + diphosphate + H(+). It catalyses the reaction a 2'-deoxyribonucleoside 5'-triphosphate + H2O = a 2'-deoxyribonucleoside 5'-phosphate + diphosphate + H(+). Functionally, nucleoside triphosphate pyrophosphatase. May have a dual role in cell division arrest and in preventing the incorporation of modified nucleotides into cellular nucleic acids. The sequence is that of Nucleoside triphosphate pyrophosphatase from Prochlorococcus marinus (strain NATL1A).